We begin with the raw amino-acid sequence, 296 residues long: MDILLANVSGLQFKAERDLIEQVGAIPLPFYGMDKSIAAVCNFITRNGQECDKGSACPFRHIRGDRTIVCKHWLRGLCKKGDQCEFLHEYDMTKMPECYFYSRFNACHNKECPFLHIDPQSKVKDCPWYKRGFCRHGPHCRHQHLRRVLCMDYLAGFCPEGPSCKHMHPHFELPPLAELGKDQLHKKLPTCHYCGELGHKANSCKQYVGSLEHRNNINAMDHSGGHSGGYSGHSGHIEGADDMQSNHHSQPHGPGFVKVPTPLEEITCYKCGNKGHYANKCPKGHLAFLSNQHSHK.

5 consecutive C3H1-type zinc fingers follow at residues 35-63, 64-91, 92-119, 120-147, and 149-171; these read KSIA…RHIR, GDRT…HEYD, MTKM…HIDP, QSKV…HLRR, and LCMD…HPHF. The CCHC-type 1 zinc-finger motif lies at 189-206; sequence PTCHYCGELGHKANSCKQ. The segment at 222–254 is disordered; the sequence is HSGGHSGGYSGHSGHIEGADDMQSNHHSQPHGP. The segment at 266-283 adopts a CCHC-type 2 zinc-finger fold; sequence ITCYKCGNKGHYANKCPK.

Component of the cleavage and polyadenylation specificity factor (CPSF) complex, composed of at least Clp, Cpsf73, Cpsf100 and Cpsf160. In terms of tissue distribution, during oogenesis, expression is detected in the germarium, in nurse cells, in the oocyte, and in the somatically derived follicular epithelial cells (at protein level). At oogenesis stage 12, nurse cells degenerate and their content is transferred into the oocyte. In larvae, expressed in all organs and disks (at protein level). In the larval salivary gland, expression is initially confined to cells at the anterior end but later expands throughout the entire gland (at protein level).

Its subcellular location is the nucleus. Its function is as follows. Component of the cleavage and polyadenylation specificity factor (CPSF) complex that plays a key role in pre-mRNA 3'-end formation, recognizing the AAUAAA signal sequence and interacting with poly(A) polymerase and other factors to bring about cleavage and poly(A) addition. Has endonuclease activity. Binds RNA polymers with a preference for G- and/or C-rich clusters. Binds single-stranded DNA non-specifically. This Drosophila melanogaster (Fruit fly) protein is Cleavage and polyadenylation specificity factor subunit 4 (Clp).